A 385-amino-acid chain; its full sequence is 1-deoxy-D-xylulose 5-phosphate reductoisomerase 1 (385 aa).

Residues Thr-11, Gly-12, Ser-13, Ile-14, Asn-39, and Asn-122 each coordinate NADPH. Lys-123 lines the 1-deoxy-D-xylulose 5-phosphate pocket. Glu-124 serves as a coordination point for NADPH. Asp-148 contributes to the Mn(2+) binding site. 1-deoxy-D-xylulose 5-phosphate-binding residues include Ser-149, Glu-150, Ser-174, and His-197. Glu-150 provides a ligand contact to Mn(2+). Position 203 (Gly-203) interacts with NADPH. Ser-210, Asn-215, Lys-216, and Glu-219 together coordinate 1-deoxy-D-xylulose 5-phosphate. Residue Glu-219 participates in Mn(2+) binding.

This sequence belongs to the DXR family. It depends on Mg(2+) as a cofactor. Mn(2+) serves as cofactor.

It carries out the reaction 2-C-methyl-D-erythritol 4-phosphate + NADP(+) = 1-deoxy-D-xylulose 5-phosphate + NADPH + H(+). The protein operates within isoprenoid biosynthesis; isopentenyl diphosphate biosynthesis via DXP pathway; isopentenyl diphosphate from 1-deoxy-D-xylulose 5-phosphate: step 1/6. Functionally, catalyzes the NADPH-dependent rearrangement and reduction of 1-deoxy-D-xylulose-5-phosphate (DXP) to 2-C-methyl-D-erythritol 4-phosphate (MEP). This is 1-deoxy-D-xylulose 5-phosphate reductoisomerase 1 from Bacillus cereus (strain ATCC 14579 / DSM 31 / CCUG 7414 / JCM 2152 / NBRC 15305 / NCIMB 9373 / NCTC 2599 / NRRL B-3711).